A 727-amino-acid chain; its full sequence is 1,4-alpha-glucan branching enzyme GlgB (727 aa).

The Nucleophile role is filled by Asp-405. Catalysis depends on Glu-458, which acts as the Proton donor.

Belongs to the glycosyl hydrolase 13 family. GlgB subfamily. In terms of assembly, monomer.

The enzyme catalyses Transfers a segment of a (1-&gt;4)-alpha-D-glucan chain to a primary hydroxy group in a similar glucan chain.. Its pathway is glycan biosynthesis; glycogen biosynthesis. In terms of biological role, catalyzes the formation of the alpha-1,6-glucosidic linkages in glycogen by scission of a 1,4-alpha-linked oligosaccharide from growing alpha-1,4-glucan chains and the subsequent attachment of the oligosaccharide to the alpha-1,6 position. The polypeptide is 1,4-alpha-glucan branching enzyme GlgB (Yersinia enterocolitica serotype O:8 / biotype 1B (strain NCTC 13174 / 8081)).